The following is a 262-amino-acid chain: Shikimate dehydrogenase (NADP(+)) (262 aa).

Shikimate is bound by residues 15–17 (SRS) and Thr62. Residue Lys66 is the Proton acceptor of the active site. Glu78 lines the NADP(+) pocket. Shikimate-binding residues include Asn87 and Asp102. Residues 126-130 (GAGGA), 150-155 (NRTLAR), and Met214 contribute to the NADP(+) site. Tyr216 serves as a coordination point for shikimate. Gly236 provides a ligand contact to NADP(+).

Belongs to the shikimate dehydrogenase family. Homodimer.

It catalyses the reaction shikimate + NADP(+) = 3-dehydroshikimate + NADPH + H(+). It functions in the pathway metabolic intermediate biosynthesis; chorismate biosynthesis; chorismate from D-erythrose 4-phosphate and phosphoenolpyruvate: step 4/7. Involved in the biosynthesis of the chorismate, which leads to the biosynthesis of aromatic amino acids. Catalyzes the reversible NADPH linked reduction of 3-dehydroshikimate (DHSA) to yield shikimate (SA). In Acinetobacter baumannii (strain ATCC 17978 / DSM 105126 / CIP 53.77 / LMG 1025 / NCDC KC755 / 5377), this protein is Shikimate dehydrogenase (NADP(+)).